Consider the following 163-residue polypeptide: Staphylokinase (163 aa).

Residues 1-27 (MLKRSLLFLTVLLLLFSFSSITNEVSA) form the signal peptide.

Belongs to the staphylokinase family.

The protein resides in the secreted. In terms of biological role, potent plasminogen activator that converts plasminogen into plasmin. It forms a 1:1 complex with plasmin, which in turn activates other plasminogen molecules. The chain is Staphylokinase (sak) from Staphylococcus phage phi13 (Bacteriophage phi-13).